The chain runs to 483 residues: PRAME family member 12 (483 aa).

An LRR 1; degenerate repeat occupies 97 to 122 (RWKLQVLDLRNVDENFWGIWSGASAL). Residues 177-201 (HVCCKELQIFGIAIHRIIEVLNTVE) form an LRR 2; degenerate repeat. The stretch at 202–228 (LDCIQEVEVCCPWELSILIRFAPYLGQ) is one LRR 3; degenerate repeat. Residues 229–264 (MRNLRKLVLFNIHVSACIPLDRKEQFVIQFTSQFLK) form an LRR 4; degenerate repeat. LRR repeat units lie at residues 265-290 (LDYF…LRCL), 291-322 (QAPL…RQLK), 323-341 (ELDL…PLSV), 347-374 (EATL…ALSR), and 375-399 (CSQL…LLRH).

This sequence belongs to the PRAME family.

The polypeptide is PRAME family member 12 (Homo sapiens (Human)).